The primary structure comprises 375 residues: Actin, cytoplasmic (375 aa).

The protein belongs to the actin family.

The protein resides in the cytoplasm. Its subcellular location is the cytoskeleton. It catalyses the reaction ATP + H2O = ADP + phosphate + H(+). Actins are highly conserved proteins that are involved in various types of cell motility and are ubiquitously expressed in all eukaryotic cells. This chain is Actin, cytoplasmic, found in Oxytricha trifallax (Sterkiella histriomuscorum).